The primary structure comprises 545 residues: Cytosolic Fe-S cluster assembly factor NAR1 (545 aa).

[4Fe-4S] cluster-binding residues include C20, C72, C75, C78, C186, and C241. The tract at residues 401–438 is disordered; it reads PSTKQTSTVKANPLASRRRARLASKTDGTASSNNATQD. Over residues 426–438 the composition is skewed to polar residues; it reads TDGTASSNNATQD. Positions 453 and 457 each coordinate [4Fe-4S] cluster.

It belongs to the NARF family.

Its function is as follows. Component of the cytosolic Fe/S protein assembly machinery. Required for maturation of extramitochondrial Fe/S proteins. May play a role in the transfer of pre-assembled Fe/S clusters to target apoproteins. The sequence is that of Cytosolic Fe-S cluster assembly factor NAR1 (NAR1) from Debaryomyces hansenii (strain ATCC 36239 / CBS 767 / BCRC 21394 / JCM 1990 / NBRC 0083 / IGC 2968) (Yeast).